Consider the following 227-residue polypeptide: MICOS complex subunit Mic19 (227 aa).

Residue glycine 2 is the site of N-myristoyl glycine attachment. A Phosphoserine modification is found at serine 29. The disordered stretch occupies residues valine 32–valine 57. The segment covering serine 39–serine 50 has biased composition (polar residues). Tyrosine 49 is modified (phosphotyrosine). Phosphoserine is present on residues serine 50, serine 51, serine 56, and serine 58. The tract at residues glutamate 73–glutamate 92 is disordered. Lysine 142 carries the post-translational modification N6-acetyllysine. The 43-residue stretch at histidine 180–methionine 222 folds into the CHCH domain. 2 consecutive short sequence motifs (cx9C motif) follow at residues cysteine 183–cysteine 193 and cysteine 204–cysteine 214. 2 cysteine pairs are disulfide-bonded: cysteine 183-cysteine 214 and cysteine 193-cysteine 204.

It belongs to the MICOS complex subunit Mic19 family. Metazoan Mic19 subfamily. As to quaternary structure, component of the mitochondrial contact site and cristae organizing system (MICOS) complex, composed of at least MICOS10/MIC10, CHCHD3/MIC19, CHCHD6/MIC25, APOOL/MIC27, IMMT/MIC60, APOO/MIC23/MIC26 and MICOS13/MIC13. This complex was also known under the names MINOS or MitOS complex. The MICOS complex associates with mitochondrial outer membrane proteins SAMM50, MTX1 and MTX2 (together described as components of the mitochondrial outer membrane sorting assembly machinery (SAM) complex) and DNAJC11, mitochondrial inner membrane protein TMEM11 and with HSPA9. The MICOS and SAM complexes together with DNAJC11 are part of a large protein complex spanning both membranes termed the mitochondrial intermembrane space bridging (MIB) complex. Interacts with HSPA1A/HSPA1B and OPA1, preferentially with the soluble OPA1 form.

The protein localises to the mitochondrion inner membrane. Its subcellular location is the cytoplasm. The protein resides in the nucleus. It localises to the mitochondrion. Component of the MICOS complex, a large protein complex of the mitochondrial inner membrane that plays crucial roles in the maintenance of crista junctions, inner membrane architecture, and formation of contact sites to the outer membrane. Has also been shown to function as a transcription factor which binds to the BAG1 promoter and represses BAG1 transcription. Plays an important role in the maintenance of the MICOS complex stability and the mitochondrial cristae morphology. The polypeptide is MICOS complex subunit Mic19 (Chchd3) (Mus musculus (Mouse)).